The following is a 1417-amino-acid chain: DNA-directed RNA polymerase subunit beta' (1417 aa).

Cysteine 68, cysteine 70, cysteine 83, and cysteine 86 together coordinate Zn(2+). Positions 458, 460, and 462 each coordinate Mg(2+). Zn(2+) contacts are provided by cysteine 811, cysteine 884, cysteine 891, and cysteine 894.

Belongs to the RNA polymerase beta' chain family. The RNAP catalytic core consists of 2 alpha, 1 beta, 1 beta' and 1 omega subunit. When a sigma factor is associated with the core the holoenzyme is formed, which can initiate transcription. Requires Mg(2+) as cofactor. Zn(2+) serves as cofactor.

The catalysed reaction is RNA(n) + a ribonucleoside 5'-triphosphate = RNA(n+1) + diphosphate. Functionally, DNA-dependent RNA polymerase catalyzes the transcription of DNA into RNA using the four ribonucleoside triphosphates as substrates. The chain is DNA-directed RNA polymerase subunit beta' from Francisella tularensis subsp. holarctica (strain OSU18).